Reading from the N-terminus, the 779-residue chain is MEEEARPAAGAGEAATPARETPPAAPAQARAASGGVPESAPEPKRRQLGTLLQPTVNKFSLRVFGSHKAVEIEQERVKSAGAWIIHPYSDFRFYWDLIMLLLMVGNLIVLPVGITFFKEENSPPWIVFNVLSDTFFLLDLVLNFRTGIVVEEGAEILLAPRAIRTRYLRTWFLVDLISSIPVDYIFLVVELEPRLDAEVYKTARALRIVRFTKILSLLRLLRLSRLIRYIHQWEEIFHMTYDLASAVVRIFNLIGMMLLLCHWDGCLQFLVPMLQDFPSDCWVSMNRMVNHSWGRQYSHALFKAMSHMLCIGYGQQAPVGMPDVWLTMLSMIVGATCYAMFIGHATALIQSLDSSRRQYQEKYKQVEQYMSFHKLPADTRQRIHEYYEHRYQGKMFDEESILGELSEPLREEIINFTCRGLVAHMPLFAHADPSFVTAVLTKLRFEVFQPGDLVVREGSVGRKMYFIQHGLLSVLARGARDTRLTDGSYFGEICLLTRGRRTASVRADTYCRLYSLSVDHFNAVLEEFPMMRRAFETVAMDRLRRIGKKNSILQRKRSEPSPGSSGGVMEQHLVQHDRDMARGVRGLAPGTGARLSGKPVLWEPLVHAPLQAAAVTSNVAIALTHQRGPLPLSPDSPATLLARSARRSAGSPASPLVPVRAGPLLARGPWASTSRLPAPPARTLHASLSRTGRSQVSLLGPPPGGGARRLGPRGRPLSASQPSLPQRATGDGSPRRKGSGSERLPPSGLLAKPPGTVQPPRSSVPEPVTPRGPQISANM.

Residues Met-1–Gln-47 form a disordered region. Over Met-1–Asp-96 the chain is Cytoplasmic. The span at Pro-7–Ala-32 shows a compositional bias: low complexity. Residues Arg-45–Asp-90 are involved in subunit assembly. Residues Leu-97 to Phe-117 traverse the membrane as a helical segment. The Extracellular segment spans residues Lys-118 to Pro-123. A helical transmembrane segment spans residues Pro-124–Phe-144. Residues Arg-145–Thr-170 lie on the Cytoplasmic side of the membrane. The helical transmembrane segment at Trp-171–Leu-191 threads the bilayer. The Extracellular portion of the chain corresponds to Glu-192–Tyr-200. A helical; Voltage-sensor membrane pass occupies residues Lys-201 to Leu-221. The Cytoplasmic segment spans residues Arg-222 to Asn-252. A helical transmembrane segment spans residues Leu-253 to Met-273. The Extracellular segment spans residues Leu-274–Gln-296. N-linked (GlcNAc...) asparagine glycosylation is present at Asn-290. The segment at residues Tyr-297–Pro-318 is an intramembrane region (pore-forming). Residues Val-319–Met-328 are Extracellular-facing. A helical transmembrane segment spans residues Leu-329 to Ile-349. At Gln-350 to Met-779 the chain is on the cytoplasmic side. The segment at Asp-353 to Met-779 is interaction with KCTD3. 3',5'-cyclic AMP-binding residues include Gly-491, Glu-492, Cys-494, Arg-501, Thr-502, Arg-542, and Arg-545. Residues Lys-549–Met-569 are disordered. A Phosphoserine modification is found at Ser-633. The span at Ser-687–Ser-697 shows a compositional bias: polar residues. Residues Ser-687–Met-779 form a disordered region.

This sequence belongs to the potassium channel HCN family. Homotetramer. The potassium channel is composed of a homo- or heterotetrameric complex of pore-forming subunits. Interacts with HCN1. Interacts with KCTD3; this interaction increases cell surface expression and current density of this channel. Interacts with PEX5L. In terms of tissue distribution, detected in hypothalamus, amygdala, olfactory bulb, hippocampus and retina (at protein level). Highly expressed in brain and heart, in particular in ventricle, atrium and in sinoatrial node (SAN). Detected at low levels in skeletal muscle and lung. Expressed in DRG neurons.

It is found in the cell membrane. It carries out the reaction K(+)(in) = K(+)(out). The enzyme catalyses Na(+)(in) = Na(+)(out). With respect to regulation, unlike HCN2 and HCN4, HCN3 is insensitive to cyclic nucleotides, such as cAMP or cGMP. This lack of sensitivity of HCN3, despite harboring a functional cyclic nucleotide-binding domain (CNBD), may be explained by its shorter C-terminal sequence, which may alter the normal autoinhibition of the channel. Inhibited by Cs(1+) and ivabradine. Phosphatidylinositol-4,5-bisphosphate (PIP(2)) shifts HCN3 activation to more depolarized potentials and accelerated activation kinetics. Functionally, hyperpolarization-activated ion channel that are permeable to sodium and potassium ions, with an about 3:1 preference for potassium ions. Contributes to the native pacemaker currents in heart (If) and in neurons (Ih). In particular, plays a pivotal role in maintaining excitability and promoting rhythmic burst firing within hypothalamic nuclei. Exerts a significant influence on the configuration of the cardiac action potential waveform. Does not appear to play a prominent role in the processing of acute, neuropathic, or inflammatory pain. The polypeptide is Potassium/sodium hyperpolarization-activated cyclic nucleotide-gated channel 3 (Hcn3) (Mus musculus (Mouse)).